The chain runs to 233 residues: Orotidine 5'-phosphate decarboxylase (233 aa).

Substrate contacts are provided by residues aspartate 13, lysine 35, 62–71, threonine 122, arginine 182, glutamine 191, glycine 211, and arginine 212; that span reads DLKFHDIPNT. Lysine 64 (proton donor) is an active-site residue.

It belongs to the OMP decarboxylase family. Type 1 subfamily. In terms of assembly, homodimer.

The catalysed reaction is orotidine 5'-phosphate + H(+) = UMP + CO2. It participates in pyrimidine metabolism; UMP biosynthesis via de novo pathway; UMP from orotate: step 2/2. Functionally, catalyzes the decarboxylation of orotidine 5'-monophosphate (OMP) to uridine 5'-monophosphate (UMP). This Pseudomonas putida (strain ATCC 47054 / DSM 6125 / CFBP 8728 / NCIMB 11950 / KT2440) protein is Orotidine 5'-phosphate decarboxylase.